The following is a 264-amino-acid chain: Gap junction beta-1 protein (264 aa).

Topologically, residues 1 to 22 (MNWAGLYAILSGVNRHSTSIGR) are cytoplasmic. Residues 23 to 45 (IWLSVVFIFRIMVLVAAAESVWG) form a helical membrane-spanning segment. The Extracellular segment spans residues 46–75 (DEKSAFTCNTQQPGCNSVCYDHFFPISHIR). The helical transmembrane segment at 76–98 (LWALQLIIVSTPALLVAMHVAHL) threads the bilayer. Residues 99-130 (QHQEKKELRLSRHVKDQELAEVKKHKVKISGT) are Cytoplasmic-facing. A helical transmembrane segment spans residues 131-153 (LWWTYISSVFFRIIFEAAFMYIF). The Extracellular portion of the chain corresponds to 154–191 (YLIYPGYSMIRLLKCDAYPCPNTVDCFVSRPTEKTIFT). The chain crosses the membrane as a helical span at residues 192-214 (VFMLVASGVCIVLNVAEVFFLIA). The Cytoplasmic segment spans residues 215–264 (QACTRRARRHRDSGSISKEHQQNEMNLLITGGSIIKRSAGQEKGDHCSTS).

It belongs to the connexin family. Beta-type (group I) subfamily. As to quaternary structure, a connexon is composed of a hexamer of connexins. As to expression, lung, liver, intestines, stomach and kidney.

The protein resides in the cell membrane. It localises to the cell junction. The protein localises to the gap junction. One gap junction consists of a cluster of closely packed pairs of transmembrane channels, the connexons, through which materials of low MW diffuse from one cell to a neighboring cell. The chain is Gap junction beta-1 protein (gjb1) from Xenopus laevis (African clawed frog).